Here is an 874-residue protein sequence, read N- to C-terminus: MSALSRWLLIPPVSARLSERYQGYRRHGASPFSAALGCLWTILAWIVFPLEHPRWQRIRDGHKALYPHINAARPRPLDPARYLIQTLWLVMISSTKERHEPRWRSFARLKDVRGRYHQWMDTLPERVRQKTTHLEKEKELGHLSNGARRFILGVIVTFSLILALICITQPFNPLSQFIFLLLLWGVALLVRRMPGRFSALMLIVLSLTVSCRYIWWRYTSTLNWDDPVSLVCGLILLFAETYAWIVLVLGYFQVVWPLNRQPVPLPKEMSQWPTVDIFVPTYNEDLNVVKNTIYASLGIDWPKDKLNIWILDDGGRESFRQFARHVGVHYIARATHEHAKAGNINNALKHAKGEFVAIFDCDHVPTRSFLQMTMGWFLKEKQLAMMQTPHHFFSPDPFERNLGRFRKTPNEGTLFYGLVQDGNDMWDATFFCGSCAVIRRKPLDEIGGIAVETVTEDAHTSLRLHRRGYTSAYMRIPQSAGLATESLSAHIGQRIRWARGMVQIFRLDNPLFGKGLKLAQRLCYLNAMFHFLSGIPRLIFLTAPLAFLLLHAYIIYAPALMIALFVIPHMVHASLTNSKIQGKYRHSFWSEIYETVLAWYIAPPTLVALINPHKGKFNVTAKGGLVEEKYVDWVISRPYIFLVLLNLLGVAAGVWRYYYGPENETLTVIVSLVWVFYNLVILGGAVAVSVESKQVRRAHRVEIAMPGAIAREDGHLFSCTVHDFSDGGLGIKINGQAQVLEGQKVNLLLKRGQQEYVFPTQVVRVTGNEVGLQLMPLTTKQHIDFVQCTFARADTWALWQDSFPEDKPLESLLDILKLGFRGYRHLAEFAPPSVKVIFRSLTALIAWIVSFIPRRPERQAAIQPSDRVMAQAQQ.

The next 4 membrane-spanning stretches (helical) occupy residues 30–50 (SPFS…VFPL), 151–171 (ILGV…TQPF), 173–193 (PLSQ…VRRM), and 230–250 (LVCG…LVLG). The tract at residues 271–364 (QWPTVDIFVP…FVAIFDCDHV (94 aa)) is catalytic subdomain A. D313 is an active-site residue. Substrate contacts are provided by D360 and D362. Residues 441–501 (KPLDEIGGIA…GQRIRWARGM (61 aa)) form a catalytic subdomain B region. The active site involves D457. The next 5 helical transmembrane spans lie at 525-545 (LNAM…TAPL), 547-567 (FLLL…LFVI), 592-612 (IYET…LINP), 634-654 (VISR…AAGV), and 668-688 (VIVS…AVAV). The PilZ domain occupies 694–790 (QVRRAHRVEI…QHIDFVQCTF (97 aa)). The chain crosses the membrane as a helical span at residues 833 to 853 (SVKVIFRSLTALIAWIVSFIP).

Belongs to the glycosyltransferase 2 family. Mg(2+) is required as a cofactor.

It is found in the cell inner membrane. It catalyses the reaction [(1-&gt;4)-beta-D-glucosyl](n) + UDP-alpha-D-glucose = [(1-&gt;4)-beta-D-glucosyl](n+1) + UDP + H(+). Its pathway is glycan metabolism; bacterial cellulose biosynthesis. Activated by bis-(3'-5') cyclic diguanylic acid (c-di-GMP). In terms of biological role, catalytic subunit of cellulose synthase. It polymerizes uridine 5'-diphosphate glucose to cellulose, which is produced as an extracellular component for mechanical and chemical protection at the onset of the stationary phase, when the cells exhibit multicellular behavior (rdar morphotype). Coexpression of cellulose and thin aggregative fimbriae leads to a hydrophobic network with tightly packed cells embedded in a highly inert matrix. The chain is Cellulose synthase catalytic subunit [UDP-forming] (bcsA) from Salmonella typhi.